Here is an 857-residue protein sequence, read N- to C-terminus: Leucine--tRNA ligase (857 aa).

Residues 42 to 52 carry the 'HIGH' region motif; that stretch reads PYPSGTLHMGH. The short motif at 616-620 is the 'KMSKS' region element; sequence KMSKS. Lys619 lines the ATP pocket.

It belongs to the class-I aminoacyl-tRNA synthetase family.

Its subcellular location is the cytoplasm. The catalysed reaction is tRNA(Leu) + L-leucine + ATP = L-leucyl-tRNA(Leu) + AMP + diphosphate. This is Leucine--tRNA ligase from Parasynechococcus marenigrum (strain WH8102).